Here is a 240-residue protein sequence, read N- to C-terminus: Thiamine-phosphate synthase (240 aa).

4-amino-2-methyl-5-(diphosphooxymethyl)pyrimidine is bound by residues 63–67 and Asn94; that span reads QYREK. The Mg(2+) site is built by Asp95 and Asp114. Thr133 is a binding site for 4-amino-2-methyl-5-(diphosphooxymethyl)pyrimidine. Residue 159-161 participates in 2-[(2R,5Z)-2-carboxy-4-methylthiazol-5(2H)-ylidene]ethyl phosphate binding; sequence TFT. A 4-amino-2-methyl-5-(diphosphooxymethyl)pyrimidine-binding site is contributed by Lys162. Residues Gly190 and 210 to 211 each bind 2-[(2R,5Z)-2-carboxy-4-methylthiazol-5(2H)-ylidene]ethyl phosphate; that span reads IS.

The protein belongs to the thiamine-phosphate synthase family. Mg(2+) is required as a cofactor.

It carries out the reaction 2-[(2R,5Z)-2-carboxy-4-methylthiazol-5(2H)-ylidene]ethyl phosphate + 4-amino-2-methyl-5-(diphosphooxymethyl)pyrimidine + 2 H(+) = thiamine phosphate + CO2 + diphosphate. The catalysed reaction is 2-(2-carboxy-4-methylthiazol-5-yl)ethyl phosphate + 4-amino-2-methyl-5-(diphosphooxymethyl)pyrimidine + 2 H(+) = thiamine phosphate + CO2 + diphosphate. The enzyme catalyses 4-methyl-5-(2-phosphooxyethyl)-thiazole + 4-amino-2-methyl-5-(diphosphooxymethyl)pyrimidine + H(+) = thiamine phosphate + diphosphate. Its pathway is cofactor biosynthesis; thiamine diphosphate biosynthesis; thiamine phosphate from 4-amino-2-methyl-5-diphosphomethylpyrimidine and 4-methyl-5-(2-phosphoethyl)-thiazole: step 1/1. Functionally, condenses 4-methyl-5-(beta-hydroxyethyl)thiazole monophosphate (THZ-P) and 2-methyl-4-amino-5-hydroxymethyl pyrimidine pyrophosphate (HMP-PP) to form thiamine monophosphate (TMP). This chain is Thiamine-phosphate synthase, found in Methanosarcina mazei (strain ATCC BAA-159 / DSM 3647 / Goe1 / Go1 / JCM 11833 / OCM 88) (Methanosarcina frisia).